The sequence spans 261 residues: tRNA pseudouridine synthase A (261 aa).

The active-site Nucleophile is Asp51. Substrate is bound at residue Tyr109.

This sequence belongs to the tRNA pseudouridine synthase TruA family. As to quaternary structure, homodimer.

It catalyses the reaction uridine(38/39/40) in tRNA = pseudouridine(38/39/40) in tRNA. Functionally, formation of pseudouridine at positions 38, 39 and 40 in the anticodon stem and loop of transfer RNAs. The protein is tRNA pseudouridine synthase A of Shewanella baltica (strain OS155 / ATCC BAA-1091).